The primary structure comprises 250 residues: 3alpha-hydroxysteroid dehydrogenase (250 aa).

Positions 93, 158, and 162 each coordinate NADP(+). Tyrosine 158 functions as the Proton acceptor in the catalytic mechanism.

It belongs to the short-chain dehydrogenases/reductases (SDR) family.

It catalyses the reaction lithocholate + NADP(+) = 3-oxo-5beta-cholan-24-oate + NADPH + H(+). The catalysed reaction is deoxycholate + NADP(+) = 12alpha-hydroxy-3-oxo-5beta-cholan-24-oate + NADPH + H(+). The enzyme catalyses deoxycholate + NAD(+) = 12alpha-hydroxy-3-oxo-5beta-cholan-24-oate + NADH + H(+). It carries out the reaction cholate + NADP(+) = 7alpha,12alpha-dihydroxy-3-oxo-5beta-cholan-24-oate + NADPH + H(+). It catalyses the reaction chenodeoxycholate + NADP(+) = 3-oxochenodeoxycholate + NADPH + H(+). Functionally, involved in the modification of secondary bile acids into iso-bile acids (3beta-bile acids) via epimerization of the 3-OH group through a 3-oxo-intermediate. Catalyzes the oxidation of deoxycholate (DCA) and lithocholate (LCA) to yield 12-alpha-hydroxy-3-oxo-5-beta-cholan-24-oate (3-oxo-DCA) and 3-oxo-5-beta-cholan-24-oate (3-oxo-LCA), respectively. Is also able to catalyze the oxidation of cholate (CA) and chenodeoxycholate (CDCA) into 3-dehydrocholate (3-oxo-CA) and 7-alpha-hydroxy-3-oxo-5-beta-cholan-24-oate (3-oxo-CDCA), respectively. Can also catalyze the reverse reactions in vitro. Accepts both NADPH and NADH as cosubstrates. The conversion of the abundant bile acid DCA into isoDCA by the gut bacterium R.gnavus favors the growth of the keystone commensal genus Bacteroides, since isoDCA is less cytotoxic than its parent compound, DCA; iso-bile acids have thus a potential role in modulating gut community composition. This chain is 3alpha-hydroxysteroid dehydrogenase, found in Mediterraneibacter gnavus (strain ATCC 29149 / DSM 114966 / JCM 6515 / VPI C7-9) (Ruminococcus gnavus).